The following is a 71-amino-acid chain: Translation initiation factor IF-1 (71 aa).

The S1-like domain occupies 1–71 (MSKDDLIQFT…LTKGRVIHRH (71 aa)).

The protein belongs to the IF-1 family. Component of the 30S ribosomal translation pre-initiation complex which assembles on the 30S ribosome in the order IF-2 and IF-3, IF-1 and N-formylmethionyl-tRNA(fMet); mRNA recruitment can occur at any time during PIC assembly.

It localises to the cytoplasm. One of the essential components for the initiation of protein synthesis. Stabilizes the binding of IF-2 and IF-3 on the 30S subunit to which N-formylmethionyl-tRNA(fMet) subsequently binds. Helps modulate mRNA selection, yielding the 30S pre-initiation complex (PIC). Upon addition of the 50S ribosomal subunit IF-1, IF-2 and IF-3 are released leaving the mature 70S translation initiation complex. The protein is Translation initiation factor IF-1 of Rickettsia akari (strain Hartford).